The primary structure comprises 446 residues: Thymidine phosphorylase (446 aa).

This sequence belongs to the thymidine/pyrimidine-nucleoside phosphorylase family. In terms of assembly, homodimer.

It catalyses the reaction thymidine + phosphate = 2-deoxy-alpha-D-ribose 1-phosphate + thymine. Its pathway is pyrimidine metabolism; dTMP biosynthesis via salvage pathway; dTMP from thymine: step 1/2. Its function is as follows. The enzymes which catalyze the reversible phosphorolysis of pyrimidine nucleosides are involved in the degradation of these compounds and in their utilization as carbon and energy sources, or in the rescue of pyrimidine bases for nucleotide synthesis. The chain is Thymidine phosphorylase from Psychromonas ingrahamii (strain DSM 17664 / CCUG 51855 / 37).